A 643-amino-acid chain; its full sequence is Threonine--tRNA ligase (643 aa).

The region spanning 3-64 (DVVKITFPDG…EEDGAISIIT (62 aa)) is the TGS domain. Residues 245 to 542 (DHRKLGKELD…LIEEYKGAFP (298 aa)) form a catalytic region. Zn(2+)-binding residues include Cys-338, His-389, and His-519.

This sequence belongs to the class-II aminoacyl-tRNA synthetase family. In terms of assembly, homodimer. The cofactor is Zn(2+).

It is found in the cytoplasm. The enzyme catalyses tRNA(Thr) + L-threonine + ATP = L-threonyl-tRNA(Thr) + AMP + diphosphate + H(+). In terms of biological role, catalyzes the attachment of threonine to tRNA(Thr) in a two-step reaction: L-threonine is first activated by ATP to form Thr-AMP and then transferred to the acceptor end of tRNA(Thr). Also edits incorrectly charged L-seryl-tRNA(Thr). The protein is Threonine--tRNA ligase of Anoxybacillus flavithermus (strain DSM 21510 / WK1).